The following is a 356-amino-acid chain: S-adenosylmethionine:tRNA ribosyltransferase-isomerase (356 aa).

Belongs to the QueA family. In terms of assembly, monomer.

It is found in the cytoplasm. The enzyme catalyses 7-aminomethyl-7-carbaguanosine(34) in tRNA + S-adenosyl-L-methionine = epoxyqueuosine(34) in tRNA + adenine + L-methionine + 2 H(+). Its pathway is tRNA modification; tRNA-queuosine biosynthesis. In terms of biological role, transfers and isomerizes the ribose moiety from AdoMet to the 7-aminomethyl group of 7-deazaguanine (preQ1-tRNA) to give epoxyqueuosine (oQ-tRNA). The sequence is that of S-adenosylmethionine:tRNA ribosyltransferase-isomerase from Escherichia coli (strain 55989 / EAEC).